We begin with the raw amino-acid sequence, 260 residues long: uncharacterized protein (260 aa).

This is an uncharacterized protein from Bacillus subtilis (strain 168).